The primary structure comprises 151 residues: MTNNKEERLKQLTRMQYEVTQKNGTEPPFQNEYWDLHEDGIYVDIVSGKPLFSSLDKFDAHCGWPSFTKPVDAGEIEEKLDTSHGMIRTEVRSKSADSHLGHVFPDGPGPDGLRYCINSAALRFVPKDDLEKEGYGEYVKLFERKKSGEES.

Residues Lys-5–Lys-127 enclose the MsrB domain. Cys-116 serves as the catalytic Nucleophile.

This sequence belongs to the MsrB Met sulfoxide reductase family.

It carries out the reaction L-methionyl-[protein] + [thioredoxin]-disulfide + H2O = L-methionyl-(R)-S-oxide-[protein] + [thioredoxin]-dithiol. This is Peptide methionine sulfoxide reductase MsrB from Bacillus licheniformis (strain ATCC 14580 / DSM 13 / JCM 2505 / CCUG 7422 / NBRC 12200 / NCIMB 9375 / NCTC 10341 / NRRL NRS-1264 / Gibson 46).